Reading from the N-terminus, the 370-residue chain is Putrescine-binding periplasmic protein PotF (370 aa).

The N-terminal stretch at 1-26 (MTALNKKWLSGLVAGALMAVSVGTLA) is a signal peptide. A putrescine-binding site is contributed by serine 38. Cysteines 175 and 239 form a disulfide. 2 residues coordinate putrescine: aspartate 247 and aspartate 278.

The protein belongs to the bacterial solute-binding protein PotD/PotF family. The complex is composed of two ATP-binding proteins (PotG), two transmembrane proteins (PotH and PotI) and a solute-binding protein (PotF).

It is found in the periplasm. Its activity is regulated as follows. Transport is feedback inhibited by intracellular polyamines. Its function is as follows. Part of the ABC transporter complex PotFGHI involved in putrescine uptake. Binds putrescine. Imports putrescine for maintenance of the optimal concentration of polyamines necessary for cell growth in the presence of glucose. In Escherichia coli (strain K12), this protein is Putrescine-binding periplasmic protein PotF.